We begin with the raw amino-acid sequence, 341 residues long: Inositol monophosphatase 3 (341 aa).

Residues 11–31 form a helical membrane-spanning segment; that stretch reads LGIAVFCLLGVGVIYHLYAGV. Mg(2+) contacts are provided by glutamate 117, aspartate 157, leucine 159, aspartate 160, and aspartate 283. Glutamate 117 contacts substrate. Residues 159–162 and aspartate 283 each bind substrate; that span reads LDAT.

Belongs to the inositol monophosphatase superfamily. It depends on Mg(2+) as a cofactor.

It localises to the membrane. The catalysed reaction is a myo-inositol phosphate + H2O = myo-inositol + phosphate. Its pathway is polyol metabolism; myo-inositol biosynthesis; myo-inositol from D-glucose 6-phosphate: step 2/2. This Danio rerio (Zebrafish) protein is Inositol monophosphatase 3 (bpnt2).